The chain runs to 107 residues: Homeobox protein HD-7 (107 aa).

Residues K21 to N80 constitute a DNA-binding region (homeobox).

It localises to the nucleus. This chain is Homeobox protein HD-7 (HD-7), found in Encephalitozoon cuniculi (strain GB-M1) (Microsporidian parasite).